The primary structure comprises 597 residues: Aspartate--tRNA(Asp/Asn) ligase (597 aa).

E176 provides a ligand contact to L-aspartate. Positions 200-203 (QQFK) are aspartate. Positions 222 and 451 each coordinate L-aspartate. 222-224 (RDE) contributes to the ATP binding site. Position 489 (E489) interacts with ATP. R496 contacts L-aspartate. Position 541 to 544 (541 to 544 (GIDR)) interacts with ATP.

Belongs to the class-II aminoacyl-tRNA synthetase family. Type 1 subfamily. Homodimer.

It localises to the cytoplasm. It carries out the reaction tRNA(Asx) + L-aspartate + ATP = L-aspartyl-tRNA(Asx) + AMP + diphosphate. In terms of biological role, aspartyl-tRNA synthetase with relaxed tRNA specificity since it is able to aspartylate not only its cognate tRNA(Asp) but also tRNA(Asn). Reaction proceeds in two steps: L-aspartate is first activated by ATP to form Asp-AMP and then transferred to the acceptor end of tRNA(Asp/Asn). This chain is Aspartate--tRNA(Asp/Asn) ligase, found in Orientia tsutsugamushi (strain Boryong) (Rickettsia tsutsugamushi).